Reading from the N-terminus, the 942-residue chain is Protein inturned (942 aa).

Disordered regions lie at residues 1 to 56 (MAGL…PEWL) and 128 to 156 (LPRRHHKKSSSNNGPVSILKHQSSQKTGV). The span at 22 to 32 (SQEEEEEEGDS) shows a compositional bias: acidic residues. Positions 33–48 (DAGASSLGSYSSASSD) are enriched in low complexity. A compositionally biased stretch (polar residues) spans 137 to 156 (SSNNGPVSILKHQSSQKTGV). Residues 185–267 (LLEVLVGIIH…PMQVKLTFEN (83 aa)) form the PDZ domain. Phosphoserine is present on residues Ser-674 and Ser-678. A disordered region spans residues 707 to 751 (KARKPSPSRIGGGREPTEGEESAGLSPHATPDAVRKQRESEGSDD).

It belongs to the inturned family. As to quaternary structure, component of the CPLANE (ciliogenesis and planar polarity effectors) complex, composed of INTU, FUZ and WDPCP. Interacts with CPLANE1. Interacts with NPHP4 and DAAM1; INTU is mediating the interaction between NPHP4 and DAAM1. Widely expressed in E8.5 and E9.5 wild type embryos. Present in various adult organs (at protein level).

It is found in the cytoplasm. It localises to the cell surface. Its subcellular location is the cytoskeleton. The protein resides in the cilium basal body. The protein localises to the microtubule organizing center. It is found in the centrosome. It localises to the centriole. Functionally, plays a key role in ciliogenesis and embryonic development. Regulator of cilia formation by controlling the organization of the apical actin cytoskeleton and the positioning of the basal bodies at the apical cell surface, which in turn is essential for the normal orientation of elongating ciliary microtubules. Plays a key role in definition of cell polarity via its role in ciliogenesis but not via conversion extension. Has an indirect effect on hedgehog signaling. Proposed to function as core component of the CPLANE (ciliogenesis and planar polarity effectors) complex involved in the recruitment of peripheral IFT-A proteins to basal bodies. Required for recruitment of CPLANE2 to the mother centriole. Binds phosphatidylinositol 3-phosphate with highest affinity, followed by phosphatidylinositol 4-phosphate and phosphatidylinositol 5-phosphate. This Mus musculus (Mouse) protein is Protein inturned (Intu).